The primary structure comprises 1446 residues: ABC-type transporter oblD (1446 aa).

N-linked (GlcNAc...) asparagine glycosylation is found at Asn-9, Asn-28, Asn-222, Asn-281, and Asn-305. Residues 104–357 (LEVLSLVSKA…FLDMGFVCPD (254 aa)) form the ABC transporter 1 domain. 6 helical membrane-spanning segments follow: residues 468–488 (VTIS…SIFY), 502–522 (ALLF…MLTL), 548–568 (MIMD…VLYF), 577–597 (GAFF…SMFF), 610–630 (ALPF…FTIP), and 719–739 (IGVI…ATDF). The region spanning 796-1038 (FQWKDVCFDI…ILIDYFVRNG (243 aa)) is the ABC transporter 2 domain. 832 to 839 (GVSGAGKT) is a binding site for ATP. 5 helical membrane-spanning segments follow: residues 1147–1167 (ALCV…PNTI), 1177–1197 (IFML…HFVA), 1217–1237 (FIIS…VLMF), 1265–1285 (LMVW…IAAF), and 1301–1321 (LCLI…FWIF). Residues Asn-1344 and Asn-1359 are each glycosylated (N-linked (GlcNAc...) asparagine). A helical membrane pass occupies residues 1412 to 1432 (FGLMWVFIVFNIFAACLLYWW).

This sequence belongs to the ABC transporter superfamily. ABCG family. PDR (TC 3.A.1.205) subfamily.

The protein resides in the cell membrane. Functionally, ABC-type transporter; part of the gene cluster that mediates the biosynthesis of the sesterterpenes ophiobolins, fungal phytotoxins with potential anti-cancer activities. Acts as a specific transporter involved in ophiobolins secretion. This is ABC-type transporter oblD from Aspergillus clavatus (strain ATCC 1007 / CBS 513.65 / DSM 816 / NCTC 3887 / NRRL 1 / QM 1276 / 107).